The chain runs to 166 residues: MALNIEDKKAVVEEVSAIIAEAGSMVAAEYRGLTVEQLTELRSKAREANVSVRVVKNTLVRRAVAGTKFEDMAETFSGPLIFAFSGEELGNAARVFKDFSKANEALVVKSLSIGEGVMDASQLAAIAALPTYDEALSKLLYVMKEPVAKVARGLVAIKEQKEAEAA.

It belongs to the universal ribosomal protein uL10 family. Part of the ribosomal stalk of the 50S ribosomal subunit. The N-terminus interacts with L11 and the large rRNA to form the base of the stalk. The C-terminus forms an elongated spine to which L12 dimers bind in a sequential fashion forming a multimeric L10(L12)X complex.

In terms of biological role, forms part of the ribosomal stalk, playing a central role in the interaction of the ribosome with GTP-bound translation factors. This chain is Large ribosomal subunit protein uL10, found in Hydrogenovibrio crunogenus (strain DSM 25203 / XCL-2) (Thiomicrospira crunogena).